A 313-amino-acid polypeptide reads, in one-letter code: Formate-nitrite transporter (313 aa).

The Cytoplasmic segment spans residues 1-46; it reads MTKGSKYTIDPISVKTACTSEESYIRCVEYGKGKAHYPNLSLLAKA. Residues 47–67 form a helical membrane-spanning segment; the sequence is ILAGVFVGVCAHASGIAGGHF. Residues 68–77 lie on the Extracellular side of the membrane; sequence YYHKLREHVG. Residues 78–98 traverse the membrane as a helical segment; that stretch reads ISMSAFVYGFTFPIAFLCIIA. The Cytoplasmic segment spans residues 99-127; it reads TGSDLFTGNTLAVTTALLQRKVTLLEYLR. The chain crosses the membrane as a helical span at residues 128 to 148; sequence VMSISLFGNYVGAVSFAFFVS. At 149–184 the chain is on the extracellular side; sequence HLSGAFKKHEEIGKNHIFQFLNDIAEKKVSHTFVQC. The helical transmembrane segment at 185–205 threads the bilayer; it reads VCLAIGCNIFVCLAVYFVLTI. Residues 206-210 lie on the Cytoplasmic side of the membrane; that stretch reads KDGSG. A helical transmembrane segment spans residues 211 to 231; sequence MVFSVFFAVYAFAIAGYEHII. Residues 232-256 lie on the Extracellular side of the membrane; that stretch reads ANMYTLNLALMIEANVDWTKVYVDN. The helical transmembrane segment at 257–277 threads the bilayer; that stretch reads LLPTLIGNYIAGAIVLACPLF. Topologically, residues 278 to 313 are cytoplasmic; it reads YIYRHSYSDYEKTRGDGGNSGLKSLSIEMQNGSSGR. Residues 290-313 are disordered; that stretch reads TRGDGGNSGLKSLSIEMQNGSSGR. A compositionally biased stretch (polar residues) spans 298–313; sequence GLKSLSIEMQNGSSGR.

This sequence belongs to the FNT transporter (TC 1.A.16) family. In terms of assembly, homopentamer.

It is found in the cell membrane. The protein localises to the vacuole membrane. The catalysed reaction is (S)-lactate(in) + H(+)(in) = (S)-lactate(out) + H(+)(out). It carries out the reaction formate(in) + H(+)(in) = formate(out) + H(+)(out). The enzyme catalyses pyruvate(out) + H(+)(out) = pyruvate(in) + H(+)(in). It catalyses the reaction acetate(out) + H(+)(out) = acetate(in) + H(+)(in). Inhibited by the Malaria Box compound MMV007839 and its derivatives BH296 and BH267.meta. Its function is as follows. Monocarboxylate-proton symporter that mediates the efflux of the waste product lactate in the intraerythrocytic parasites; active in acidic-to-neutral pH range. Transports L-lactate. The protein is Formate-nitrite transporter of Plasmodium vivax.